The primary structure comprises 759 residues: Pseudocleavage protein nop-1 (759 aa).

Disordered regions lie at residues 1-46 (MSAP…SSIF), 334-361 (KIFP…MDKK), 379-413 (LSVN…NLSQ), 440-495 (QSSR…KKER), and 732-759 (ESDG…GAKI). Residues 10–42 (DIHSDDRDHADHQTKKEKHWFEEKSEQNGENRR) show a composition bias toward basic and acidic residues. Residues 448–465 (TGNSSISSGVGSIASGTS) are compositionally biased toward low complexity. A compositionally biased stretch (polar residues) spans 473–482 (GSRSGQSISR). Over residues 485–495 (SRRDDEGKKER) the composition is skewed to basic and acidic residues. The segment covering 736 to 759 (PASSNDDFDTQSTASTSTVFGAKI) has biased composition (polar residues).

Its subcellular location is the nucleus. It localises to the cytoplasm. The protein resides in the cell cortex. It is found in the cleavage furrow. Required for formation of the pseudocleavage furrow during the first cleavage of the embryo and also mediates aster-induced furrowing during cytokinesis. Promotes cortical recruitment of ani-1 and nmy-2 during pseudocleavage and cytokinesis and promotes the accumulation of actin at furrowing regions. Regulates establishment of embryonic cell polarity. This chain is Pseudocleavage protein nop-1 (nop-1), found in Caenorhabditis elegans.